A 95-amino-acid chain; its full sequence is Protein TusB (95 aa).

It belongs to the DsrH/TusB family. Heterohexamer, formed by a dimer of trimers. The hexameric TusBCD complex contains 2 copies each of TusB, TusC and TusD. The TusBCD complex interacts with TusE.

The protein resides in the cytoplasm. In terms of biological role, part of a sulfur-relay system required for 2-thiolation of 5-methylaminomethyl-2-thiouridine (mnm(5)s(2)U) at tRNA wobble positions. The chain is Protein TusB from Salmonella arizonae (strain ATCC BAA-731 / CDC346-86 / RSK2980).